Reading from the N-terminus, the 202-residue chain is 3-isopropylmalate dehydratase small subunit (202 aa).

It belongs to the LeuD family. LeuD type 1 subfamily. In terms of assembly, heterodimer of LeuC and LeuD.

It carries out the reaction (2R,3S)-3-isopropylmalate = (2S)-2-isopropylmalate. It functions in the pathway amino-acid biosynthesis; L-leucine biosynthesis; L-leucine from 3-methyl-2-oxobutanoate: step 2/4. Its function is as follows. Catalyzes the isomerization between 2-isopropylmalate and 3-isopropylmalate, via the formation of 2-isopropylmaleate. The polypeptide is 3-isopropylmalate dehydratase small subunit (Rhizobium etli (strain ATCC 51251 / DSM 11541 / JCM 21823 / NBRC 15573 / CFN 42)).